An 84-amino-acid polypeptide reads, in one-letter code: Small ribosomal subunit protein uS17 (84 aa).

This sequence belongs to the universal ribosomal protein uS17 family. Part of the 30S ribosomal subunit.

Functionally, one of the primary rRNA binding proteins, it binds specifically to the 5'-end of 16S ribosomal RNA. The polypeptide is Small ribosomal subunit protein uS17 (Proteus mirabilis (strain HI4320)).